Consider the following 184-residue polypeptide: Shikimate kinase (184 aa).

17–22 (GAGKTT) serves as a coordination point for ATP. Residue Thr21 participates in Mg(2+) binding. 3 residues coordinate substrate: Asp39, Arg63, and Gly85. Arg123 is an ATP binding site. Arg142 contributes to the substrate binding site.

The protein belongs to the shikimate kinase family. In terms of assembly, monomer. Requires Mg(2+) as cofactor.

Its subcellular location is the cytoplasm. The enzyme catalyses shikimate + ATP = 3-phosphoshikimate + ADP + H(+). It participates in metabolic intermediate biosynthesis; chorismate biosynthesis; chorismate from D-erythrose 4-phosphate and phosphoenolpyruvate: step 5/7. Catalyzes the specific phosphorylation of the 3-hydroxyl group of shikimic acid using ATP as a cosubstrate. This is Shikimate kinase from Burkholderia lata (strain ATCC 17760 / DSM 23089 / LMG 22485 / NCIMB 9086 / R18194 / 383).